We begin with the raw amino-acid sequence, 113 residues long: U11-theraphotoxin-Hhn1j (113 aa).

A signal peptide spans 1–21 (MNTVRVTFLLVFVLAVSLGQA). The propeptide occupies 22–74 (DKDENRMEMQEKTEQGKSYLDFAENLLLQKLEELEAKLLEEDSEESRNSRQKR). Over residues 60–69 (LEEDSEESRN) the composition is skewed to basic and acidic residues. The disordered stretch occupies residues 60–83 (LEEDSEESRNSRQKRCIGEGVPCD). 3 disulfide bridges follow: Cys-75–Cys-90, Cys-82–Cys-95, and Cys-89–Cys-110.

The protein belongs to the neurotoxin 14 (magi-1) family. 01 (HNTX-16) subfamily. As to expression, expressed by the venom gland.

It localises to the secreted. Its function is as follows. Probable ion channel inhibitor. This chain is U11-theraphotoxin-Hhn1j, found in Cyriopagopus hainanus (Chinese bird spider).